We begin with the raw amino-acid sequence, 208 residues long: Non-specific lipid transfer protein GPI-anchored 4 (208 aa).

The signal sequence occupies residues 1-25 (MKQSLLLSFVLLLLSSSSLVTPIHA). N-linked (GlcNAc...) asparagine glycosylation is found at Asn-27, Asn-67, and Asn-105. 4 disulfides stabilise this stretch: Cys-48–Cys-91, Cys-58–Cys-75, Cys-76–Cys-116, and Cys-89–Cys-125. Residues 136-181 (GASPVSPSAGAPTTSPSAAKSPETSATSPSSDETPSMTAPSPSSSG) are disordered. Residue Ser-179 is the site of GPI-anchor amidated serine attachment. Residues 180–208 (SGTNILSVPALTIVFVIVSSVAYISAFSN) constitute a propeptide, removed in mature form.

It belongs to the plant LTP family. In terms of tissue distribution, confined to the anthers and stamen of the inflorescence, especially in pollen.

The protein localises to the cell membrane. Its function is as follows. Lipid transfer protein involved in seed and ovule maturation and development, probably by regulating the fatty acids homeostasis during suberin and sporopollenin biosynthesis or deposition. The chain is Non-specific lipid transfer protein GPI-anchored 4 from Arabidopsis thaliana (Mouse-ear cress).